The primary structure comprises 458 residues: Riboflavin transporter 2 (458 aa).

Transmembrane regions (helical) follow at residues 11 to 31 (LFGM…PLIV), 38 to 58 (WYLP…PLFV), 73 to 93 (PVIY…AFFW), 97 to 117 (VPLA…LLSV), and 146 to 166 (GVSG…VVHC). 4 N-linked (GlcNAc...) asparagine glycosylation sites follow: N168, N176, N182, and N199. The chain crosses the membrane as a helical span at residues 204–224 (VFFLFLSAMMVVCLAAFLLLN). Positions 249 to 274 (DQALSLSHRPQEEKPMISSPDSHRRA) are disordered. 5 consecutive transmembrane segments (helical) span residues 279-299 (FGTG…LAWV), 325-345 (LAAT…MFLP), 349-369 (LVLI…IMAM), 388-408 (IVIA…IIGV), and 417-437 (ALVW…LSMF).

It belongs to the riboflavin transporter family.

It localises to the cell membrane. It catalyses the reaction riboflavin(in) = riboflavin(out). In terms of biological role, plasma membrane transporter mediating the uptake by cells of the water soluble vitamin B2/riboflavin that plays a key role in biochemical oxidation-reduction reactions of the carbohydrate, lipid, and amino acid metabolism. This chain is Riboflavin transporter 2 (rft2), found in Salmo salar (Atlantic salmon).